Consider the following 156-residue polypeptide: Acyl carrier protein, mitochondrial (156 aa).

The transit peptide at 1 to 68 (MASRVLSAYV…GRVTQLCRQY (68 aa)) directs the protein to the mitochondrion. The Carrier domain maps to 77–152 (EGIQDRVLYV…EIVDYIADKK (76 aa)). At K88 the chain carries N6-acetyllysine. O-(pantetheine 4'-phosphoryl)serine is present on S112.

This sequence belongs to the acyl carrier protein (ACP) family. In terms of assembly, mammalian complex I is composed of 45 different subunits. Interacts with ETFRF1. Identified in a complex composed of MALSU1, MIEF1 upstream open reading frame protein and NDUFAB1; within the trimeric complex, MIEF1 upstream open reading frame protein functions as a bridging scaffold that interacts with MALSU1 on one side, and with NDUFAB1 on the other side. The complex interacts with the mitochondrial large ribosomal subunit. Interacts with alpha-1-microglobulin chain; this interaction is required for the maintenance of mitochondrial redox homeostasis. Component of the mitochondrial core iron-sulfur cluster (ISC) complex composed of NFS1, LYRM4, NDUFAB1, ISCU, FXN, and FDX2; this complex is a heterohexamer containing two copies of each monomer. Component of the cyteine desulfurase complex composed of NFS1, LYRM4 and NDUFAB1; this complex contributes to the stability and cysteine desulfurase activity of NFS1. Phosphopantetheinylation at Ser-112 is essential for interactions with LYR motif-containing proteins.

It is found in the mitochondrion. In terms of biological role, carrier of the growing fatty acid chain in fatty acid biosynthesis. Accessory and non-catalytic subunit of the mitochondrial membrane respiratory chain NADH dehydrogenase (Complex I), which functions in the transfer of electrons from NADH to the respiratory chain. Accessory protein, of the core iron-sulfur cluster (ISC) assembly complex, that regulates, in association with LYRM4, the stability and the cysteine desulfurase activity of NFS1 and participates in the [2Fe-2S] clusters assembly on the scaffolding protein ISCU. The core iron-sulfur cluster (ISC) assembly complex is involved in the de novo synthesis of a [2Fe-2S] cluster, the first step of the mitochondrial iron-sulfur protein biogenesis. This process is initiated by the cysteine desulfurase complex (NFS1:LYRM4:NDUFAB1) that produces persulfide which is delivered on the scaffold protein ISCU in a FXN-dependent manner. Then this complex is stabilized by FDX2 which provides reducing equivalents to accomplish the [2Fe-2S] cluster assembly. Finally, the [2Fe-2S] cluster is transferred from ISCU to chaperone proteins, including HSCB, HSPA9 and GLRX5. The sequence is that of Acyl carrier protein, mitochondrial from Pongo pygmaeus (Bornean orangutan).